Reading from the N-terminus, the 798-residue chain is Protocadherin beta-14 (798 aa).

An N-terminal signal peptide occupies residues 1 to 26; the sequence is MEIRGALDLRKRQVLIFLVLLGLSRA. The Extracellular segment spans residues 27-686; sequence GTESAHYSVA…APAQAQADSL (660 aa). Cadherin domains are found at residues 35–133, 138–242, 247–347, 352–451, and 456–561; these read VAEE…SPTF, ILIK…APEF, YEVQ…PPEV, ITKR…APTF, and YTLF…SPFV. A disulfide bridge connects residues Cys-96 and Cys-102. Asn-169 is a glycosylation site (N-linked (GlcNAc...) asparagine). N-linked (GlcNAc...) asparagine glycosylation is found at Asn-359, Asn-418, Asn-436, Asn-487, and Asn-567. The 104-residue stretch at 568–671 folds into the Cadherin 6 domain; that stretch reads GSAPCTELVP…LVDGFSQPYL (104 aa). A helical membrane pass occupies residues 687–711; that stretch reads TVYLVVALASVSSLFLFSVLLFVAV. Residues 712–798 are Cytoplasmic-facing; it reads RLCRRSRAAS…FRNSFGLNIQ (87 aa).

The protein localises to the cell membrane. In terms of biological role, potential calcium-dependent cell-adhesion protein. May be involved in the establishment and maintenance of specific neuronal connections in the brain. This chain is Protocadherin beta-14 (PCDHB14), found in Homo sapiens (Human).